The following is a 134-amino-acid chain: MRALPICLVALMLSGCSMLSRSPVEPVQSTAPQPKAEPAKPKAPRATPVRIYTNAEELVGKPFRDLGEVSGDSCQASNQDSPPSIPTARKRMQINASKMKANAVLLHSCEVTSGTPGCYRQAVCIGSALNITAK.

Residues 1 to 15 (MRALPICLVALMLSG) form the signal peptide. Residue Cys-16 is the site of N-palmitoyl cysteine attachment. A lipid anchor (S-diacylglycerol cysteine) is attached at Cys-16. Disordered regions lie at residues 22–48 (SPVE…RATP) and 67–88 (GEVS…IPTA). The segment covering 72-82 (DSCQASNQDSP) has biased composition (polar residues). Disulfide bonds link Cys-74-Cys-118 and Cys-109-Cys-124.

This sequence belongs to the RcsF family.

It is found in the cell outer membrane. In terms of biological role, essential component of the Rcs signaling system, which controls transcription of numerous genes. Plays a role in signal transduction from the cell surface to the histidine kinase RcsC. May detect outer membrane defects. This is Outer membrane lipoprotein RcsF from Escherichia coli O6:H1 (strain CFT073 / ATCC 700928 / UPEC).